Here is a 167-residue protein sequence, read N- to C-terminus: Probable glutathione peroxidase 8 (167 aa).

The active site involves Cys-41.

It belongs to the glutathione peroxidase family.

It catalyses the reaction 2 glutathione + H2O2 = glutathione disulfide + 2 H2O. Functionally, may constitute a glutathione peroxidase-like protective system against oxidative stresses. This is Probable glutathione peroxidase 8 (GPX8) from Arabidopsis thaliana (Mouse-ear cress).